Here is a 121-residue protein sequence, read N- to C-terminus: Small ribosomal subunit protein uS13 (121 aa).

Residues 93–121 form a disordered region; that stretch reads KGLPLRGQKTKTNARTRKGPKKTIANKKK.

It belongs to the universal ribosomal protein uS13 family. As to quaternary structure, part of the 30S ribosomal subunit. Forms a loose heterodimer with protein S19. Forms two bridges to the 50S subunit in the 70S ribosome.

Functionally, located at the top of the head of the 30S subunit, it contacts several helices of the 16S rRNA. In the 70S ribosome it contacts the 23S rRNA (bridge B1a) and protein L5 of the 50S subunit (bridge B1b), connecting the 2 subunits; these bridges are implicated in subunit movement. Contacts the tRNAs in the A and P-sites. The chain is Small ribosomal subunit protein uS13 from Clostridium perfringens (strain ATCC 13124 / DSM 756 / JCM 1290 / NCIMB 6125 / NCTC 8237 / Type A).